The primary structure comprises 266 residues: Uridylate kinase (266 aa).

Residue 26-29 (KLGG) coordinates ATP. Glycine 67 is a binding site for UMP. Positions 68 and 72 each coordinate ATP. UMP-binding positions include aspartate 87 and 148–155 (LGAPYFST). The ATP site is built by tyrosine 181 and aspartate 184.

Belongs to the UMP kinase family. As to quaternary structure, homohexamer.

The protein localises to the cytoplasm. The enzyme catalyses UMP + ATP = UDP + ADP. Its pathway is pyrimidine metabolism; CTP biosynthesis via de novo pathway; UDP from UMP (UMPK route): step 1/1. Inhibited by UTP. Catalyzes the reversible phosphorylation of UMP to UDP. The chain is Uridylate kinase from Acidothermus cellulolyticus (strain ATCC 43068 / DSM 8971 / 11B).